An 890-amino-acid polypeptide reads, in one-letter code: Inter-alpha-trypsin inhibitor heavy chain H3 (890 aa).

A signal peptide spans 1–20 (MAFAWWPCLILALLSSLAAS). A propeptide spanning residues 21-34 (GFPRSPFRLLGKRS) is cleaved from the precursor. Residues 29–158 (LLGKRSLPEG…KVTFELTYEE (130 aa)) form the VIT domain. A glycan (N-linked (GlcNAc...) asparagine) is linked at asparagine 91. The VWFA domain maps to 284–467 (NVAFVIDISG…LQLQGFYEEV (184 aa)). Asparagine 580 is a glycosylation site (N-linked (GlcNAc...) asparagine). Residue aspartate 651 is modified to Aspartate 1-(chondroitin 4-sulfate)-ester. Residues 652-890 (PHFIIQIPEK…HTDYIVPNLF (239 aa)) constitute a propeptide that is removed on maturation.

Belongs to the ITIH family. In terms of assembly, I-alpha-I plasma protease inhibitors are assembled from one or two heavy chains (HC) and one light chain, bikunin. Pre-alpha-inhibitor (P-alpha-I) is composed of ITIH3/HC3 and bikunin. Heavy chains are linked to bikunin via chondroitin 4-sulfate esterified to the alpha-carboxyl of the C-terminal aspartate after propeptide cleavage.

The protein localises to the secreted. In terms of biological role, may act as a carrier of hyaluronan in serum or as a binding protein between hyaluronan and other matrix protein, including those on cell surfaces in tissues to regulate the localization, synthesis and degradation of hyaluronan which are essential to cells undergoing biological processes. The chain is Inter-alpha-trypsin inhibitor heavy chain H3 (ITIH3) from Homo sapiens (Human).